The chain runs to 307 residues: Isethionate sulfite-lyase activating enzyme (307 aa).

In terms of domain architecture, Radical SAM core spans 22-307 (HDGPGIRTVV…EAVVAQTADS (286 aa)). [4Fe-4S] cluster contacts are provided by Cys-36, Cys-40, Cys-43, Cys-62, Cys-68, Cys-71, Cys-75, Cys-95, Cys-98, Cys-102, and Cys-106. Position 42–44 (42–44 (WCS)) interacts with S-adenosyl-L-methionine. 2 4Fe-4S ferredoxin-type domains span residues 53 to 85 (VELAYNTGRCLTLAKCVRCVEICTAGAISRAED) and 86 to 117 (DTISIDRALCNDCEQLCSGACPSNALITYGAH). S-adenosyl-L-methionine contacts are provided by residues Gly-146, 195 to 197 (DIK), and His-268.

This sequence belongs to the organic radical-activating enzymes family. As to quaternary structure, monomer. It depends on [4Fe-4S] cluster as a cofactor.

The enzyme catalyses glycyl-[protein] + reduced [flavodoxin] + S-adenosyl-L-methionine = glycin-2-yl radical-[protein] + semiquinone [flavodoxin] + 5'-deoxyadenosine + L-methionine + H(+). It functions in the pathway organosulfur degradation; alkanesulfonate degradation. In terms of biological role, involved in an anaerobic respiration pathway that converts the sulfonate isethionate (2-hydroxyethanesulfonate) to ammonia, acetate and sulfide. Catalyzes activation of the isethionate sulfite-lyase IseG under anaerobic conditions by generation of an organic free radical on a glycine residue, via a homolytic cleavage of S-adenosyl-L-methionine (SAM). This chain is Isethionate sulfite-lyase activating enzyme, found in Nitratidesulfovibrio vulgaris (strain ATCC 29579 / DSM 644 / CCUG 34227 / NCIMB 8303 / VKM B-1760 / Hildenborough) (Desulfovibrio vulgaris).